Consider the following 752-residue polypeptide: Translation initiation factor IF-2 (752 aa).

Positions 148–159 (KKVKDKNKKEEP) are enriched in basic and acidic residues. Residues 148–170 (KKVKDKNKKEEPAVTPSTAPRKK) are disordered. Residues 250 to 419 (PRPPIVTVMG…ALQAEIMELK (170 aa)) form the tr-type G domain. Residues 259-266 (GHVDHGKT) are G1. GTP is bound at residue 259 to 266 (GHVDHGKT). The segment at 284–288 (GITQH) is G2. The tract at residues 305–308 (DTPG) is G3. GTP-binding positions include 305–309 (DTPGH) and 359–362 (NKID). Positions 359-362 (NKID) are G4. The G5 stretch occupies residues 395 to 397 (SAK).

It belongs to the TRAFAC class translation factor GTPase superfamily. Classic translation factor GTPase family. IF-2 subfamily.

It is found in the cytoplasm. Its function is as follows. One of the essential components for the initiation of protein synthesis. Protects formylmethionyl-tRNA from spontaneous hydrolysis and promotes its binding to the 30S ribosomal subunits. Also involved in the hydrolysis of GTP during the formation of the 70S ribosomal complex. This chain is Translation initiation factor IF-2, found in Thermodesulfovibrio yellowstonii (strain ATCC 51303 / DSM 11347 / YP87).